Consider the following 366-residue polypeptide: GTPase Obg (366 aa).

Residues 1–162 enclose the Obg domain; it reads MRFVDEATIN…RRLRLELKIL (162 aa). The region spanning 163-335 is the OBG-type G domain; it reads ADAGLLGLPN…VVDAMWRLRD (173 aa). Residues 169–176, 194–198, 218–221, 288–291, and 316–318 each bind GTP; these read GLPNAGKS, FTTLT, DIPG, NKID, and SAM. Residues Ser176 and Thr196 each coordinate Mg(2+).

It belongs to the TRAFAC class OBG-HflX-like GTPase superfamily. OBG GTPase family. As to quaternary structure, monomer. The cofactor is Mg(2+).

The protein resides in the cytoplasm. Functionally, an essential GTPase which binds GTP, GDP and possibly (p)ppGpp with moderate affinity, with high nucleotide exchange rates and a fairly low GTP hydrolysis rate. Plays a role in control of the cell cycle, stress response, ribosome biogenesis and in those bacteria that undergo differentiation, in morphogenesis control. The protein is GTPase Obg of Nitratidesulfovibrio vulgaris (strain ATCC 29579 / DSM 644 / CCUG 34227 / NCIMB 8303 / VKM B-1760 / Hildenborough) (Desulfovibrio vulgaris).